A 930-amino-acid polypeptide reads, in one-letter code: Isoleucine--tRNA ligase (930 aa).

Residues 57–67 (PYANGNIHVGH) carry the 'HIGH' region motif. Glu-554 provides a ligand contact to L-isoleucyl-5'-AMP. Positions 595–599 (KMSKS) match the 'KMSKS' region motif. An ATP-binding site is contributed by Lys-598. Cys-888, Cys-891, Cys-908, and Cys-911 together coordinate Zn(2+).

Belongs to the class-I aminoacyl-tRNA synthetase family. IleS type 1 subfamily. In terms of assembly, monomer. The cofactor is Zn(2+).

The protein localises to the cytoplasm. The enzyme catalyses tRNA(Ile) + L-isoleucine + ATP = L-isoleucyl-tRNA(Ile) + AMP + diphosphate. In terms of biological role, catalyzes the attachment of isoleucine to tRNA(Ile). As IleRS can inadvertently accommodate and process structurally similar amino acids such as valine, to avoid such errors it has two additional distinct tRNA(Ile)-dependent editing activities. One activity is designated as 'pretransfer' editing and involves the hydrolysis of activated Val-AMP. The other activity is designated 'posttransfer' editing and involves deacylation of mischarged Val-tRNA(Ile). The chain is Isoleucine--tRNA ligase from Streptococcus gordonii (strain Challis / ATCC 35105 / BCRC 15272 / CH1 / DL1 / V288).